Here is a 69-residue protein sequence, read N- to C-terminus: Toxin Tma2 (69 aa).

An LCN-type CS-alpha/beta domain is found at 2-66 (KDDYPVDTAE…SPTKTSKRCN (65 aa)). 4 cysteine pairs are disulfide-bonded: Cys14–Cys65, Cys18–Cys41, Cys27–Cys48, and Cys31–Cys50.

Belongs to the long (4 C-C) scorpion toxin superfamily. Sodium channel inhibitor family. As to expression, expressed by the venom gland.

It is found in the secreted. Its function is as follows. Inhibits voltage-gated sodium channels (Nav). This toxin shows insect lethality against crickets. The protein is Toxin Tma2 of Tityus macrochirus (Scorpion).